A 535-amino-acid polypeptide reads, in one-letter code: Phosphoenolpyruvate carboxykinase (ATP) (535 aa).

Residues Arg-59, Tyr-201, and Lys-207 each contribute to the substrate site. Residues Lys-207, His-226, and 243–251 contribute to the ATP site; that span reads GLSGTGKTT. The Mn(2+) site is built by Lys-207 and His-226. Mn(2+) is bound at residue Asp-264. ATP-binding positions include Glu-292, Arg-328, 444 to 445, and Thr-450; that span reads RI. Residue Arg-328 participates in substrate binding.

This sequence belongs to the phosphoenolpyruvate carboxykinase (ATP) family. It depends on Mn(2+) as a cofactor.

Its subcellular location is the cytoplasm. The enzyme catalyses oxaloacetate + ATP = phosphoenolpyruvate + ADP + CO2. It functions in the pathway carbohydrate biosynthesis; gluconeogenesis. In terms of biological role, involved in the gluconeogenesis. Catalyzes the conversion of oxaloacetate (OAA) to phosphoenolpyruvate (PEP) through direct phosphoryl transfer between the nucleoside triphosphate and OAA. The chain is Phosphoenolpyruvate carboxykinase (ATP) from Bacteroides thetaiotaomicron (strain ATCC 29148 / DSM 2079 / JCM 5827 / CCUG 10774 / NCTC 10582 / VPI-5482 / E50).